We begin with the raw amino-acid sequence, 397 residues long: Growth-regulating factor 1 (397 aa).

The QLQ domain maps to Pro18–Arg53. Short sequence motifs (bipartite nuclear localization signal) lie at residues Arg86–Arg105 and Arg123–Lys130. Residues Asp90–Met134 enclose the WRC domain. The tract at residues Cys117–Pro176 is disordered. The segment covering His120 to Arg129 has biased composition (basic residues). Residues Ser144–Pro174 are compositionally biased toward low complexity.

This sequence belongs to the GRF family.

It localises to the nucleus. Its function is as follows. Transcription activator that plays a regulatory role in gibberellin-induced stem elongation. In Oryza sativa subsp. japonica (Rice), this protein is Growth-regulating factor 1 (GRF1).